Consider the following 70-residue polypeptide: Small, acid-soluble spore protein I (70 aa).

It belongs to the SspI family.

It localises to the spore core. In Bacillus cytotoxicus (strain DSM 22905 / CIP 110041 / 391-98 / NVH 391-98), this protein is Small, acid-soluble spore protein I.